Consider the following 308-residue polypeptide: Phosphoribosylaminoimidazole-succinocarboxamide synthase (308 aa).

This sequence belongs to the SAICAR synthetase family.

The enzyme catalyses 5-amino-1-(5-phospho-D-ribosyl)imidazole-4-carboxylate + L-aspartate + ATP = (2S)-2-[5-amino-1-(5-phospho-beta-D-ribosyl)imidazole-4-carboxamido]succinate + ADP + phosphate + 2 H(+). It functions in the pathway purine metabolism; IMP biosynthesis via de novo pathway; 5-amino-1-(5-phospho-D-ribosyl)imidazole-4-carboxamide from 5-amino-1-(5-phospho-D-ribosyl)imidazole-4-carboxylate: step 1/2. The protein is Phosphoribosylaminoimidazole-succinocarboxamide synthase of Xylella fastidiosa (strain 9a5c).